Here is a 321-residue protein sequence, read N- to C-terminus: Lipoyl synthase (321 aa).

Residues Cys68, Cys73, Cys79, Cys94, Cys98, Cys101, and Ser308 each contribute to the [4Fe-4S] cluster site. Residues 80–297 enclose the Radical SAM core domain; that stretch reads FNHGTATFMI…REFAESIGFT (218 aa).

This sequence belongs to the radical SAM superfamily. Lipoyl synthase family. [4Fe-4S] cluster is required as a cofactor.

Its subcellular location is the cytoplasm. The enzyme catalyses [[Fe-S] cluster scaffold protein carrying a second [4Fe-4S](2+) cluster] + N(6)-octanoyl-L-lysyl-[protein] + 2 oxidized [2Fe-2S]-[ferredoxin] + 2 S-adenosyl-L-methionine + 4 H(+) = [[Fe-S] cluster scaffold protein] + N(6)-[(R)-dihydrolipoyl]-L-lysyl-[protein] + 4 Fe(3+) + 2 hydrogen sulfide + 2 5'-deoxyadenosine + 2 L-methionine + 2 reduced [2Fe-2S]-[ferredoxin]. It participates in protein modification; protein lipoylation via endogenous pathway; protein N(6)-(lipoyl)lysine from octanoyl-[acyl-carrier-protein]: step 2/2. Functionally, catalyzes the radical-mediated insertion of two sulfur atoms into the C-6 and C-8 positions of the octanoyl moiety bound to the lipoyl domains of lipoate-dependent enzymes, thereby converting the octanoylated domains into lipoylated derivatives. This is Lipoyl synthase from Shewanella sediminis (strain HAW-EB3).